We begin with the raw amino-acid sequence, 635 residues long: Probable Xaa-Pro aminopeptidase P (635 aa).

Mn(2+) is bound by residues D432, D443, E541, and E555.

The protein belongs to the peptidase M24B family. Requires Mn(2+) as cofactor.

The enzyme catalyses Release of any N-terminal amino acid, including proline, that is linked to proline, even from a dipeptide or tripeptide.. Catalyzes the removal of a penultimate prolyl residue from the N-termini of peptides. The sequence is that of Probable Xaa-Pro aminopeptidase P (AMPP) from Arthroderma gypseum (strain ATCC MYA-4604 / CBS 118893) (Microsporum gypseum).